Reading from the N-terminus, the 810-residue chain is MAQSLALALDVPETTGDEGLEPSPYEESEVHDSFHQLIQEQSLRVAEEGLELLPLGLGRGDQTLPGLEGAPALSSATLRILASMPSRTIGRSRGAIISQYYNRTVRLRRRSSRPLLGNVVPSARPSLRLYDLELDSTILEEDEKRSLLVKELQGLSAAQRDHMVRNMPLSLGEKRCLREKSWSPKGKRRHLQGRSGAFSCCSRLRYTCMLALHSLGLALLSGLYAARPWRYALKQIGGQFGSSVLSYFLFLKTLLAFNALMLLPLLAFLVGVQAAFPPDPAGPVPTFSGLELLTGGGRFTHTVMYYGYYSNSTLSPSCDAPREGGQCSPRLGSLPYNMPLAYLFTMGATFFLTCIILVYSMSHSFGESYRVGSTKGIHALTVFCSWDYKVTQKRASRVQQDSICTQLKELLAEWHLRKRPRSVCGQLRQVVVLGLGWLLCLGSTMGCTVAVLTFSEVMIQRPASGGQGVEALALPLVVSVLNLGASYLFRGLATLERHDSPVLEVYMAICRNLILKMAVLGVLCYHWLGRRVATLQGQCWEDFVGQELYRFMVVDFIFMLLDSLFGELVWRLISEKKLKRGQKPEFDIARNVLDLIYGQTLTWLGVLFSPLLPAVQILRLLFLFHIKKASLMANCQAPRRPWLASHMSTVFLTLLCFPSFLGAAVFLCYAVWQVRPSSTCGPFRTLNTMYEAGTVWVRRLEHAGSGASWLPWLHHFLVENTFFLFLASALLLAVIYFNIQVVKGQRKVICLLKEQIRNEGEDKIFLINKLHSVYEEEGRSRPGRTQDATEPPAWHEDGGDQKEPCNPRSP.

Residues 1-26 (MAQSLALALDVPETTGDEGLEPSPYE) are disordered. Residues 1–205 (MAQSLALALD…GAFSCCSRLR (205 aa)) lie on the Lumenal side of the membrane. Acidic residues predominate over residues 15–26 (TGDEGLEPSPYE). The residue at position 88 (Thr88) is a Phosphothreonine. Arg93 carries the omega-N-methylarginine modification. Asn102 carries N-linked (GlcNAc...) asparagine glycosylation. Thr104 bears the Phosphothreonine mark. Phosphoserine is present on Ser136. The helical transmembrane segment at 206–226 (YTCMLALHSLGLALLSGLYAA) threads the bilayer. Topologically, residues 227 to 253 (RPWRYALKQIGGQFGSSVLSYFLFLKT) are cytoplasmic. Residues 254-274 (LLAFNALMLLPLLAFLVGVQA) traverse the membrane as a helical segment. Residues 275-338 (AFPPDPAGPV…PRLGSLPYNM (64 aa)) are Lumenal-facing. An N-linked (GlcNAc...) asparagine glycan is attached at Asn311. The chain crosses the membrane as a helical span at residues 339-359 (PLAYLFTMGATFFLTCIILVY). Over 360–429 (SMSHSFGESY…PRSVCGQLRQ (70 aa)) the chain is Cytoplasmic. Residues 430 to 450 (VVVLGLGWLLCLGSTMGCTVA) form a helical membrane-spanning segment. The Lumenal segment spans residues 451–468 (VLTFSEVMIQRPASGGQG). Residues 469-489 (VEALALPLVVSVLNLGASYLF) form a helical membrane-spanning segment. Topologically, residues 490-504 (RGLATLERHDSPVLE) are cytoplasmic. A helical membrane pass occupies residues 505–525 (VYMAICRNLILKMAVLGVLCY). Residues 526–552 (HWLGRRVATLQGQCWEDFVGQELYRFM) lie on the Lumenal side of the membrane. Residues 553–573 (VVDFIFMLLDSLFGELVWRLI) form a helical membrane-spanning segment. Topologically, residues 574 to 603 (SEKKLKRGQKPEFDIARNVLDLIYGQTLTW) are cytoplasmic. The chain crosses the membrane as a helical span at residues 604–624 (LGVLFSPLLPAVQILRLLFLF). Residues 625 to 649 (HIKKASLMANCQAPRRPWLASHMST) are Lumenal-facing. Residues 650-670 (VFLTLLCFPSFLGAAVFLCYA) form a helical membrane-spanning segment. Residues 671 to 721 (VWQVRPSSTCGPFRTLNTMYEAGTVWVRRLEHAGSGASWLPWLHHFLVENT) lie on the Cytoplasmic side of the membrane. The chain crosses the membrane as a helical span at residues 722-742 (FFLFLASALLLAVIYFNIQVV). The Lumenal portion of the chain corresponds to 743-810 (KGQRKVICLL…QKEPCNPRSP (68 aa)). A disordered region spans residues 775–810 (EEEGRSRPGRTQDATEPPAWHEDGGDQKEPCNPRSP). A compositionally biased stretch (basic and acidic residues) spans 793–810 (AWHEDGGDQKEPCNPRSP).

It belongs to the TMC family. Interacts with TMC8. Interacts and forms a complex with TMC8 and CIB1; the interaction stabilizes each component of the complex. Interacts and forms a complex with TMC8 and SLC30A1/ZNT1; the interaction regulates zinc transport into the ER. In terms of tissue distribution, widely expressed. Highly expressed in thymus, lung and spleen. Expressed in lymphocytes and peripheral lymphocytes. Expressed in small and medium dorsal root ganglion (DRG) neurons.

Its subcellular location is the endoplasmic reticulum membrane. Functionally, acts as a regulatory protein involved in the regulation of numerous cellular processes. Together with its homolog TMC8/EVER2, forms a complex with calcium-binding protein CIB1 in lymphocytes and keratynocytes where TMC6 and TMC8 stabilize CIB1 and reciprocally. Together with TMC8, also forms a complex with and activates zinc transporter ZNT1 at the ER membrane of keratynocytes, thereby facilitating zinc uptake into the ER. Down-regulates the activity of transcription factors induced by zinc and cytokines. Also plays a role in thermal sensation by inhibiting the M-channel (KCNQ2-KCNQ3 channel) current in primary sensory neurons. In Mus musculus (Mouse), this protein is Transmembrane channel-like protein 6.